Reading from the N-terminus, the 209-residue chain is Large ribosomal subunit protein uL3 (209 aa).

The interval Arg-130–Arg-154 is disordered.

This sequence belongs to the universal ribosomal protein uL3 family. Part of the 50S ribosomal subunit. Forms a cluster with proteins L14 and L19.

In terms of biological role, one of the primary rRNA binding proteins, it binds directly near the 3'-end of the 23S rRNA, where it nucleates assembly of the 50S subunit. In Clostridium kluyveri (strain NBRC 12016), this protein is Large ribosomal subunit protein uL3.